The primary structure comprises 222 residues: Beta-casein (222 aa).

A signal peptide spans 1 to 15 (MKVLILACLVALAIA). Position 27 is a phosphothreonine (Thr27). Phosphoserine is present on residues Ser30, Ser32, Ser33, and Ser34.

Belongs to the beta-casein family. Mammary gland specific. Secreted in milk.

It is found in the secreted. Important role in determination of the surface properties of the casein micelles. The polypeptide is Beta-casein (CSN2) (Capra hircus (Goat)).